The sequence spans 183 residues: Cell division protein SepF (183 aa).

The segment at methionine 13 to glutamate 58 is disordered. Positions aspartate 16–aspartate 36 are enriched in acidic residues.

This sequence belongs to the SepF family. Homodimer. Interacts with FtsZ.

It localises to the cytoplasm. Its function is as follows. Cell division protein that is part of the divisome complex and is recruited early to the Z-ring. Probably stimulates Z-ring formation, perhaps through the cross-linking of FtsZ protofilaments. Its function overlaps with FtsA. The chain is Cell division protein SepF from Lachnospira eligens (strain ATCC 27750 / DSM 3376 / VPI C15-48 / C15-B4) (Eubacterium eligens).